A 250-amino-acid polypeptide reads, in one-letter code: UPF0736 protein RBAM_011410 (250 aa).

The protein belongs to the UPF0736 family.

This chain is UPF0736 protein RBAM_011410, found in Bacillus velezensis (strain DSM 23117 / BGSC 10A6 / LMG 26770 / FZB42) (Bacillus amyloliquefaciens subsp. plantarum).